Reading from the N-terminus, the 301-residue chain is UDP-N-acetylenolpyruvoylglucosamine reductase (301 aa).

In terms of domain architecture, FAD-binding PCMH-type spans 29-195 (KIGGPADVFV…VEAIFSLTRG (167 aa)). The active site involves arginine 174. The Proton donor role is filled by serine 224. The active site involves glutamate 294.

It belongs to the MurB family. It depends on FAD as a cofactor.

The protein resides in the cytoplasm. The enzyme catalyses UDP-N-acetyl-alpha-D-muramate + NADP(+) = UDP-N-acetyl-3-O-(1-carboxyvinyl)-alpha-D-glucosamine + NADPH + H(+). Its pathway is cell wall biogenesis; peptidoglycan biosynthesis. In terms of biological role, cell wall formation. The polypeptide is UDP-N-acetylenolpyruvoylglucosamine reductase (Halalkalibacterium halodurans (strain ATCC BAA-125 / DSM 18197 / FERM 7344 / JCM 9153 / C-125) (Bacillus halodurans)).